The sequence spans 258 residues: Serine protease sp-Eoc49 (258 aa).

Residues 1–18 form the signal peptide; that stretch reads MVLIRVLANLLVLQLSYA. The Peptidase S1 domain occupies 25–249; that stretch reads VVGGGECNRN…YTDWIQSIIA (225 aa). The N-linked (GlcNAc...) asparagine glycan is linked to asparagine 44. The cysteines at positions 50 and 66 are disulfide-linked. Histidine 65 acts as the Charge relay system in catalysis. 2 N-linked (GlcNAc...) asparagine glycosylation sites follow: asparagine 79 and asparagine 103. Aspartate 110 (charge relay system) is an active-site residue. Cystine bridges form between cysteine 142–cysteine 210, cysteine 174–cysteine 189, and cysteine 200–cysteine 225. A glycan (N-linked (GlcNAc...) asparagine) is linked at asparagine 154. The active-site Charge relay system is the serine 204. Asparagine 251 carries an N-linked (GlcNAc...) asparagine glycan.

This sequence belongs to the peptidase S1 family. Snake venom subfamily. Monomer. As to expression, expressed by the venom gland.

The protein localises to the secreted. Its function is as follows. Snake venom serine protease that may act in the hemostasis system of the prey. The sequence is that of Serine protease sp-Eoc49 from Echis ocellatus (Ocellated saw-scaled viper).